A 687-amino-acid polypeptide reads, in one-letter code: Glycine--tRNA ligase beta subunit (687 aa).

It belongs to the class-II aminoacyl-tRNA synthetase family. In terms of assembly, tetramer of two alpha and two beta subunits.

It is found in the cytoplasm. The catalysed reaction is tRNA(Gly) + glycine + ATP = glycyl-tRNA(Gly) + AMP + diphosphate. This Neisseria meningitidis serogroup C (strain 053442) protein is Glycine--tRNA ligase beta subunit.